A 187-amino-acid polypeptide reads, in one-letter code: uncharacterized protein (187 aa).

Positions 53 to 187 constitute a Tyr recombinase domain; the sequence is RKPHIYSPAD…CLQTSYVVPG (135 aa). Residues arginine 98 and lysine 123 contribute to the active site.

It belongs to the 'phage' integrase family.

This is an uncharacterized protein from Sinorhizobium fredii (strain NBRC 101917 / NGR234).